Here is a 407-residue protein sequence, read N- to C-terminus: Arginine deiminase (407 aa).

The active-site Amidino-cysteine intermediate is Cys397.

The protein belongs to the arginine deiminase family.

The protein resides in the cytoplasm. It catalyses the reaction L-arginine + H2O = L-citrulline + NH4(+). Its pathway is amino-acid degradation; L-arginine degradation via ADI pathway; carbamoyl phosphate from L-arginine: step 1/2. This Listeria welshimeri serovar 6b (strain ATCC 35897 / DSM 20650 / CCUG 15529 / CIP 8149 / NCTC 11857 / SLCC 5334 / V8) protein is Arginine deiminase.